We begin with the raw amino-acid sequence, 526 residues long: Fusicoccadiene 8-ol C-16-hydroxylase (526 aa).

The helical transmembrane segment at 34–56 (AFVGFSVLGLTLLFSKLFYNAYL) threads the bilayer. 3 N-linked (GlcNAc...) asparagine glycosylation sites follow: Asn-309, Asn-418, and Asn-434. Cys-470 contributes to the heme binding site.

Belongs to the cytochrome P450 family. Heme serves as cofactor.

The protein resides in the membrane. It participates in mycotoxin biosynthesis. Its function is as follows. Cytochrome P450 monooxygenase; part of the 2 gene clusters that mediate the biosynthesis of fusicoccins, diterpene glucosides that display phytohormone-like activity and function as potent activators of plasma membrane H(+)-ATPases in plants by modifying 14-3-3 proteins and cause the plant disease constriction canker. The first step in the pathway is performed by the fusicoccadiene synthase PaFS that possesses both prenyl transferase and terpene cyclase activity, converting isopentenyl diphosphate and dimethylallyl diphosphate into geranylgeranyl diphosphate (GGDP) and successively converting GGDP into fusicocca-2,10(14)-diene, a precursor for fusicoccin H. The second step is the oxidation at the C-8 position by the cytochrome P450 monooxygenase PaP450-2 to yield fusicocca-2,10(14)-diene-8-beta-ol. The cytochrome P450 monooxygenase PaP450-1 then catalyzes the hydroxylation at the C-16 position to produce fusicocca-2,10(14)-diene-8-beta,16-diol. The dioxygenase fc-dox then catalyzes the 16-oxydation of fusicocca-2,10(14)-diene-8-beta,16-diol to yield an aldehyde (8-beta-hydroxyfusicocca-1,10(14)-dien-16-al). The short-chain dehydrogenase/reductase fc-sdr catalyzes the reduction of the aldehyde to yield fusicocca-1,10(14)-diene-8-beta,16-diol. The next step is the hydroxylation at C-9 performed by the cytochrome P450 monooxygenase PaP450-3 that leads to fusicoccin H aglycon which is glycosylated to fusicoccin H by the O-glycosyltransferase PaGT. Hydroxylation at C-12 by the cytochrome P450 monooxygenase PaP450-4 leads then to the production of fusicoccin Q and is followed by methylation by the O-methyltransferase PaMT to yield fusicoccin P. Fusicoccin P is further converted to fusicoccin J via prenylation by the O-glucose prenyltransferase PaPT. Cytochrome P450 monooxygenase PaP450-5 then performs hydroxylation at C-19 to yield dideacetyl-fusicoccin A which is acetylated to 3'-O-deacetyl-fusicoccin A by the O-acetyltransferase PaAT-2. Finally, a another acetylation by the O-acetyltransferase PaAT-1 yields fusicoccin A. This is Fusicoccadiene 8-ol C-16-hydroxylase from Phomopsis amygdali (Fusicoccum amygdali).